The sequence spans 931 residues: Envelope glycoprotein B (931 aa).

The first 71 residues, 1-71 (MSPCGYYSKW…FSMFVTAVVS (71 aa)), serve as a signal peptide directing secretion. At 72 to 786 (VSPSSFYESL…HGFTTFLSNP (715 aa)) the chain is on the virion surface side. 5 cysteine pairs are disulfide-bonded: Cys-122–Cys-584, Cys-139–Cys-540, Cys-213–Cys-277, Cys-369–Cys-417, and Cys-608–Cys-645. The N-linked (GlcNAc...) asparagine; by host glycan is linked to Asn-147. Positions 179–185 (AWAGSSY) are involved in fusion and/or binding to host membrane. A glycan (N-linked (GlcNAc...) asparagine; by host) is linked at Asn-257. The tract at residues 264–271 (GTPGTYRT) is involved in fusion and/or binding to host membrane. Asn-435, Asn-503, Asn-620, and Asn-686 each carry an N-linked (GlcNAc...) asparagine; by host glycan. 2 hydrophobic membrane proximal region regions span residues 731 to 784 (IDKV…TFLS) and 764 to 784 (VVLGATGALLSTVHGFTTFLS). The helical transmembrane segment at 787–807 (FGALAVGLLVLAGLVAAFFAY) threads the bilayer. Residues 808 to 931 (RYVLKLKTSP…RVRTENVTGV (124 aa)) are Intravirion-facing. A Golgi targeting motif is present at residues 881 to 884 (YMTL). The Di-leucine internalization motif signature appears at 904–906 (LLT). Positions 920–923 (YSRV) match the Internalization motif motif.

Belongs to the herpesviridae glycoprotein B family. As to quaternary structure, homotrimer; disulfide-linked. Binds to heparan sulfate proteoglycans. Interacts with gH/gL heterodimer. Interacts with gE. A proteolytic cleavage by host furin generates two subunits that remain linked by disulfide bonds.

The protein localises to the virion membrane. It is found in the host cell membrane. Its subcellular location is the host endosome membrane. It localises to the host Golgi apparatus membrane. Functionally, envelope glycoprotein that forms spikes at the surface of virion envelope. Essential for the initial attachment to heparan sulfate moieties of the host cell surface proteoglycans. Involved in fusion of viral and cellular membranes leading to virus entry into the host cell. Following initial binding to its host receptors, membrane fusion is mediated by the fusion machinery composed at least of gB and the heterodimer gH/gL. May be involved in the fusion between the virion envelope and the outer nuclear membrane during virion egress. This is Envelope glycoprotein B from Varicella-zoster virus (strain Dumas) (HHV-3).